The chain runs to 345 residues: Probable dual-specificity RNA methyltransferase RlmN (345 aa).

The active-site Proton acceptor is the E98. The region spanning 104-332 (TYKRLTVCVS…VSIRYSRGLE (229 aa)) is the Radical SAM core domain. A disulfide bond links C111 and C337. [4Fe-4S] cluster is bound by residues C118, C122, and C125. Residues 165 to 166 (GE), S195, 218 to 220 (SLH), and N294 contribute to the S-adenosyl-L-methionine site. C337 acts as the S-methylcysteine intermediate in catalysis.

This sequence belongs to the radical SAM superfamily. RlmN family. The cofactor is [4Fe-4S] cluster.

It localises to the cytoplasm. It catalyses the reaction adenosine(2503) in 23S rRNA + 2 reduced [2Fe-2S]-[ferredoxin] + 2 S-adenosyl-L-methionine = 2-methyladenosine(2503) in 23S rRNA + 5'-deoxyadenosine + L-methionine + 2 oxidized [2Fe-2S]-[ferredoxin] + S-adenosyl-L-homocysteine. The enzyme catalyses adenosine(37) in tRNA + 2 reduced [2Fe-2S]-[ferredoxin] + 2 S-adenosyl-L-methionine = 2-methyladenosine(37) in tRNA + 5'-deoxyadenosine + L-methionine + 2 oxidized [2Fe-2S]-[ferredoxin] + S-adenosyl-L-homocysteine. Its function is as follows. Specifically methylates position 2 of adenine 2503 in 23S rRNA and position 2 of adenine 37 in tRNAs. This chain is Probable dual-specificity RNA methyltransferase RlmN, found in Trichodesmium erythraeum (strain IMS101).